An 861-amino-acid polypeptide reads, in one-letter code: Nuclear cap-binding protein complex subunit 1 (861 aa).

The Nuclear localization signal motif lies at Arg22–Pro30. The MIF4G domain occupies Cys36–Lys264.

The protein belongs to the NCBP1 family. In terms of assembly, component of the nuclear cap-binding complex (CBC), a heterodimer composed of STO1/CBC1 and CBC2 that interacts with capped RNAs. The complex interacts strongly with the importin subunit alpha SRP1. The SRP1-CBC trimer also binds to capped RNAs, but formation of the importin alpha/beta heterodimer upon binding of KAP95 to SRP1 in the cytoplasm causes dissociation of CBC from the RNA. The CBC complex is part of the commitment complex 1 (CC1), binding to the cap of pre-mRNA and interacting with U1 snRNP subunits MUD2 and SNU56. The CBC complex is part of the NRD1 complex, composed of CBC2, NAB1, NRD1, SEN1 and STO1/CBC2. The CBC complex also interacts with NPL3 and eIF4G (TIF4631 and TIF4632).

The protein resides in the nucleus. Its subcellular location is the cytoplasm. It localises to the perinuclear region. Component of the CBC complex, which binds co-transcriptionally to the 5'-cap of pre-mRNAs and is involved in maturation, export and degradation of nuclear mRNAs. The CBC complex is required for efficient pre-mRNA splicing through efficient commitment complex and spliceosome formation. Together with NPL3, the CBC complex is required for export of mRNAs out of the nucleus. The CBC complex is also involved in nuclear mRNA degradation, probably by directing the mRNAs to the sites of degradation. Affects replication of the positive-strand RNA virus BMV. The sequence is that of Nuclear cap-binding protein complex subunit 1 (STO1) from Saccharomyces cerevisiae (strain ATCC 204508 / S288c) (Baker's yeast).